We begin with the raw amino-acid sequence, 362 residues long: Putative sphingolipid delta(4)-desaturase/C4-monooxygenase (362 aa).

Transmembrane regions (helical) follow at residues 45-61 (YVVS…CWLL), 71-91 (LEAY…IHDI), and 107-127 (FFGM…FKKY). The Histidine box-1 motif lies at 89-93 (HDISH). The short motif at 128 to 132 (HVEHH) is the Histidine box-2 element. Transmembrane regions (helical) follow at residues 160–177 (LLWL…PLII) and 198–218 (LLIL…GTII). Positions 259 to 263 (HVEHH) match the Histidine box-3 motif.

It belongs to the fatty acid desaturase type 1 family. DEGS subfamily.

It is found in the membrane. It catalyses the reaction an N-acyl-15-methylhexadecasphinganine + 2 Fe(II)-[cytochrome b5] + O2 + 2 H(+) = an N-acyl-4-hydroxy-15-methylhexadecasphinganine + 2 Fe(III)-[cytochrome b5] + H2O. The catalysed reaction is an N-acyl-15-methylhexadecasphinganine + 2 Fe(II)-[cytochrome b5] + O2 + 2 H(+) = an N-acyl-15-methylhexadecasphing-4-enine + 2 Fe(III)-[cytochrome b5] + 2 H2O. The enzyme catalyses a dihydroceramide + 2 Fe(II)-[cytochrome b5] + O2 + 2 H(+) = a phytoceramide + 2 Fe(III)-[cytochrome b5] + H2O. It carries out the reaction an N-acylsphinganine + 2 Fe(II)-[cytochrome b5] + O2 + 2 H(+) = an N-acylsphing-4-enine + 2 Fe(III)-[cytochrome b5] + 2 H2O. It catalyses the reaction N-octanoylsphinganine + 2 Fe(II)-[cytochrome b5] + O2 + 2 H(+) = N-octanoyl-4-hydroxysphinganine + 2 Fe(III)-[cytochrome b5] + H2O. The catalysed reaction is an N-acylsphinganine + 2 Fe(II)-[cytochrome b5] + O2 + 2 H(+) = an N-acyl-(4R)-4-hydroxysphinganine + 2 Fe(III)-[cytochrome b5] + H2O. It participates in lipid metabolism; sphingolipid metabolism. Functionally, bifunctional enzyme which acts both as a sphingolipid delta(4)-desaturase and a sphingolipid C4-monooxygenase. C.elegans contain specific sphingoid bases, which are unique or different in structure compared to the sphingoid bases found in other animals. Two examples of these distinctive compounds are: 15-methylhexadecasphinganine and 15-methylhexadecasphing-4-enine and this enzyme can catalyze their conversion. The chain is Putative sphingolipid delta(4)-desaturase/C4-monooxygenase (ttm-5) from Caenorhabditis elegans.